The following is a 189-amino-acid chain: Ribosome maturation factor RimM (189 aa).

Positions 95-177 constitute a PRC barrel domain; the sequence is EDDEFYYADL…AGLVDDPEEL (83 aa).

Belongs to the RimM family. As to quaternary structure, binds ribosomal protein uS19.

The protein resides in the cytoplasm. In terms of biological role, an accessory protein needed during the final step in the assembly of 30S ribosomal subunit, possibly for assembly of the head region. Essential for efficient processing of 16S rRNA. May be needed both before and after RbfA during the maturation of 16S rRNA. It has affinity for free ribosomal 30S subunits but not for 70S ribosomes. In Rhizobium leguminosarum bv. trifolii (strain WSM2304), this protein is Ribosome maturation factor RimM.